The following is a 170-amino-acid chain: Adenine phosphoribosyltransferase (170 aa).

The protein belongs to the purine/pyrimidine phosphoribosyltransferase family. In terms of assembly, homodimer.

It is found in the cytoplasm. The enzyme catalyses AMP + diphosphate = 5-phospho-alpha-D-ribose 1-diphosphate + adenine. Its pathway is purine metabolism; AMP biosynthesis via salvage pathway; AMP from adenine: step 1/1. Catalyzes a salvage reaction resulting in the formation of AMP, that is energically less costly than de novo synthesis. The polypeptide is Adenine phosphoribosyltransferase (Nitrosopumilus maritimus (strain SCM1)).